The sequence spans 96 residues: Small ribosomal subunit protein bS6 (96 aa).

It belongs to the bacterial ribosomal protein bS6 family.

In terms of biological role, binds together with bS18 to 16S ribosomal RNA. This is Small ribosomal subunit protein bS6 from Synechococcus sp. (strain JA-2-3B'a(2-13)) (Cyanobacteria bacterium Yellowstone B-Prime).